Consider the following 768-residue polypeptide: Probable dipeptidyl peptidase 4 (768 aa).

Residues 1–17 form the signal peptide; sequence MKLGKWSVLLLVGCTAA. N38, N81, N104, N113, N221, N282, and N468 each carry an N-linked (GlcNAc...) asparagine glycan. S616 serves as the catalytic Charge relay system. The N-linked (GlcNAc...) asparagine glycan is linked to N668. Catalysis depends on charge relay system residues D693 and H728.

It belongs to the peptidase S9B family.

The protein resides in the secreted. The catalysed reaction is Release of an N-terminal dipeptide, Xaa-Yaa-|-Zaa-, from a polypeptide, preferentially when Yaa is Pro, provided Zaa is neither Pro nor hydroxyproline.. In terms of biological role, extracellular dipeptidyl-peptidase which removes N-terminal dipeptides sequentially from polypeptides having unsubstituted N-termini provided that the penultimate residue is proline. In Aspergillus clavatus (strain ATCC 1007 / CBS 513.65 / DSM 816 / NCTC 3887 / NRRL 1 / QM 1276 / 107), this protein is Probable dipeptidyl peptidase 4 (dpp4).